We begin with the raw amino-acid sequence, 321 residues long: MAVITKIDTFAAIGAGVIGSGWVARALANGLDVLAWDPAEDAEMQLRANVENAWPALERAGLAPGASPARLHFVPTIEACVADADFVQESAPEREALKLELHERISRAAKPDAIIASSTSGLLPTDFYARAHRPERCIVGHPFNPVYLLPLVEVLGGERTAPDTVDAALGIYRALGMRPLRVRKEVPGFIADRLLEALWREALHLVDEGVATTGEIDDAIRFGAGIRWSFMGTFLTYTLAGGEAGMRHFMQQFGPALELPWTKLVAPKLTDALIDRVVEGTAEQQGPRSIKALERYRDECITEVIAAIAAVKARHGMRYED.

NAD(+) is bound at residue 14–19; sequence GAGVIG.

This sequence belongs to the 3-hydroxyacyl-CoA dehydrogenase family. L-carnitine dehydrogenase subfamily. Homodimer.

It is found in the cytoplasm. The catalysed reaction is carnitine + NAD(+) = 3-dehydrocarnitine + NADH + H(+). It participates in amine and polyamine metabolism; carnitine metabolism. In terms of biological role, catalyzes the NAD(+)-dependent oxidation of L-carnitine to 3-dehydrocarnitine. The chain is L-carnitine dehydrogenase from Burkholderia mallei (strain ATCC 23344).